We begin with the raw amino-acid sequence, 468 residues long: Argininosuccinate lyase (468 aa).

The protein belongs to the lyase 1 family. Argininosuccinate lyase subfamily.

The protein localises to the cytoplasm. It catalyses the reaction 2-(N(omega)-L-arginino)succinate = fumarate + L-arginine. It functions in the pathway amino-acid biosynthesis; L-arginine biosynthesis; L-arginine from L-ornithine and carbamoyl phosphate: step 3/3. The chain is Argininosuccinate lyase from Zymomonas mobilis subsp. mobilis (strain ATCC 31821 / ZM4 / CP4).